Here is a 909-residue protein sequence, read N- to C-terminus: Protein virilizer (909 aa).

Over residues 746–784 the composition is skewed to polar residues; it reads STSKNTNTNVSKQQQQPQNSTPCSSNRFLFNKSSLISQE. Residues 746–824 form a disordered region; the sequence is STSKNTNTNV…TNMTRQPTTL (79 aa). The segment covering 785–799 has biased composition (low complexity); sequence SNGSNNNSGTQGPGS. The span at 800-810 shows a compositional bias: polar residues; sequence MNESYSLDNSF. Positions 811–824 are enriched in low complexity; the sequence is NTTNTNMTRQPTTL. Residues Ser-856 and Ser-898 each carry the phosphoserine modification.

Belongs to the vir family. As to quaternary structure, component of the MIS (mRNA N6-methyladenosine (m6A) methylation) complex, at least composed of IME4, KAR4, MUM2, SLZ1, and VIR1. Interacts with KAR4. Interacts with SLZ1. Interacts with MUM2. Interacts with IME4.

It is found in the cytoplasm. It localises to the nucleus. The protein localises to the nucleolus. Component of the MIS complex, a complex that mediates N6-methyladenosine (m6A) methylation of meiotic mRNAs and is required for initiation of meiosis, progression through the meiotic divisions and sporulation. In the complex, performs a scaffolding role stabilizing the other complex members. In Saccharomyces cerevisiae (strain ATCC 204508 / S288c) (Baker's yeast), this protein is Protein virilizer.